Here is a 78-residue protein sequence, read N- to C-terminus: UPF0270 protein YPO0179/y3960/YP_0178 (78 aa).

This sequence belongs to the UPF0270 family.

This Yersinia pestis protein is UPF0270 protein YPO0179/y3960/YP_0178.